Consider the following 340-residue polypeptide: N-acetyl-gamma-glutamyl-phosphate reductase (340 aa).

Cys-146 is a catalytic residue.

This sequence belongs to the NAGSA dehydrogenase family. Type 1 subfamily.

Its subcellular location is the cytoplasm. It catalyses the reaction N-acetyl-L-glutamate 5-semialdehyde + phosphate + NADP(+) = N-acetyl-L-glutamyl 5-phosphate + NADPH + H(+). Its pathway is amino-acid biosynthesis; L-arginine biosynthesis; N(2)-acetyl-L-ornithine from L-glutamate: step 3/4. Catalyzes the NADPH-dependent reduction of N-acetyl-5-glutamyl phosphate to yield N-acetyl-L-glutamate 5-semialdehyde. The polypeptide is N-acetyl-gamma-glutamyl-phosphate reductase (Streptococcus thermophilus (strain ATCC BAA-491 / LMD-9)).